Consider the following 684-residue polypeptide: MDKFIQSFSHQYLDSSSSLKLTARRKRKLTILGLFLFSLISLMIIISYSNNNILPGLSGISISSTFSDYYSNPKQQNKFEQQIQDHQTTKKGKRTIIFPNNFNHVHDHKGSYMMKDSELVKYYVETMEQALDPEDLIYRNRFTYKLPNIPYTEQKIEMFSDGGGGGGDTSDSNTDMCPKLSTTIKVEASPAMNKNGDLKKILKTFLQEDSFYYRELSPFFPDLKKHFDEDTIDKHWYQFIGSTVWLEQYGVHLMVSRIIYTEKDQGSPKFSLAYLQVFDRNWKELDNVELIVPDPENISTTNNKNKNKKPYGYKSVLYPTIAPIPVYHNSKQTGGRFYGIEDPRIVLIKTRHGYEEPVLIYNSHHRKISEKHFDNDQEGKINFNNYRSLFIGWIWQTQLGKIHLEELPNNEFKKNEYIKIKEFVKPNNNRGRTEKNWALFINYNQRLNQGFDSHVYFANQLKNLKILKCSILNDNDDDCEWEFQMDDYEDAGVLHGGTELININQLLHQYDYPELNSIKDLIPNGREYWVGFARASLKNCGCGSRMYRPNLIVLMKDGKNYKFAYVSSFVGLGIEILPWYLDKGLCEHYNLIIPNGISSWTIEKDLHQKEKDKQVMDYMAFTISRRDATVDVVYVKGLLKALFTDSSSSKHLLAVEQTGFKSVTNVDCALKNSEKFCKIYGETF.

The Cytoplasmic portion of the chain corresponds to 1 to 28; that stretch reads MDKFIQSFSHQYLDSSSSLKLTARRKRK. A helical transmembrane segment spans residues 29–49; it reads LTILGLFLFSLISLMIIISYS. Topologically, residues 50-684 are extracellular; that stretch reads NNNILPGLSG…KFCKIYGETF (635 aa). N297 is a glycosylation site (N-linked (GlcNAc...) asparagine).

It belongs to the BMT family.

It is found in the membrane. Its function is as follows. Beta-mannosyltransferase involved in cell wall biosynthesis. Required for addition of the first beta-mannose residue to acid-stable fraction of cell wall phosphopeptidomannan. Plays a key role in reducing host inflammatory response. The polypeptide is Beta-mannosyltransferase 1 (BMT1) (Candida albicans (strain SC5314 / ATCC MYA-2876) (Yeast)).